The sequence spans 405 residues: S-adenosylmethionine synthase (405 aa).

Position 141-146 (141-146 (GQGSVD)) interacts with ATP.

The protein belongs to the AdoMet synthase 2 family. The cofactor is Mg(2+).

It carries out the reaction L-methionine + ATP + H2O = S-adenosyl-L-methionine + phosphate + diphosphate. It participates in amino-acid biosynthesis; S-adenosyl-L-methionine biosynthesis; S-adenosyl-L-methionine from L-methionine: step 1/1. Functionally, catalyzes the formation of S-adenosylmethionine from methionine and ATP. The chain is S-adenosylmethionine synthase from Methanococcus maripaludis (strain C7 / ATCC BAA-1331).